We begin with the raw amino-acid sequence, 260 residues long: Coiled-coil domain-containing protein 127 (260 aa).

A coiled-coil region spans residues 49–135 (QKEVEKEREA…QVMQEKRQVQ (87 aa)).

This is Coiled-coil domain-containing protein 127 (CCDC127) from Homo sapiens (Human).